Reading from the N-terminus, the 485-residue chain is Noelin (485 aa).

The N-terminal stretch at 1-16 (MSVPLLKIGVVLSTMA) is a signal peptide. N-linked (GlcNAc...) asparagine glycans are attached at residues asparagine 33, asparagine 103, asparagine 187, asparagine 288, asparagine 307, asparagine 394, asparagine 431, and asparagine 473. Residues 87 to 225 (RDARTKQLRQ…ERLRACMQKL (139 aa)) are a coiled coil. An Olfactomedin-like domain is found at 226–478 (ACGKLTGISD…QILYNVTLFH (253 aa)). Residues cysteine 227 and cysteine 409 are joined by a disulfide bond.

Homotetramer; disulfide-linked. Dimer of dimers, giving rise to a V-shaped homotretramer. Component of the AMPAR complex. In terms of processing, glycosylated.

The protein localises to the secreted. It is found in the synapse. The protein resides in the endoplasmic reticulum. It localises to the cell projection. Its subcellular location is the axon. The protein localises to the perikaryon. Its function is as follows. Contributes to the regulation of axonal growth. May play an important role in regulating the production of neural crest cells by the neural tube. The protein is Noelin (OLFM1) of Gallus gallus (Chicken).